Consider the following 116-residue polypeptide: Large ribosomal subunit protein bL17 (116 aa).

The protein belongs to the bacterial ribosomal protein bL17 family. Part of the 50S ribosomal subunit. Contacts protein L32.

This chain is Large ribosomal subunit protein bL17, found in Sulfurovum sp. (strain NBC37-1).